A 130-amino-acid chain; its full sequence is Prefoldin subunit alpha (130 aa).

The protein belongs to the prefoldin subunit alpha family. As to quaternary structure, heterohexamer of two alpha and four beta subunits.

It localises to the cytoplasm. In terms of biological role, molecular chaperone capable of stabilizing a range of proteins. Seems to fulfill an ATP-independent, HSP70-like function in archaeal de novo protein folding. In Thermoplasma volcanium (strain ATCC 51530 / DSM 4299 / JCM 9571 / NBRC 15438 / GSS1), this protein is Prefoldin subunit alpha.